The sequence spans 99 residues: Co-chaperonin GroES (99 aa).

This sequence belongs to the GroES chaperonin family. In terms of assembly, heptamer of 7 subunits arranged in a ring. Interacts with the chaperonin GroEL.

It localises to the cytoplasm. Its function is as follows. Together with the chaperonin GroEL, plays an essential role in assisting protein folding. The GroEL-GroES system forms a nano-cage that allows encapsulation of the non-native substrate proteins and provides a physical environment optimized to promote and accelerate protein folding. GroES binds to the apical surface of the GroEL ring, thereby capping the opening of the GroEL channel. This is Co-chaperonin GroES from Rhodococcus erythropolis (strain PR4 / NBRC 100887).